Consider the following 484-residue polypeptide: tRNA sulfurtransferase (484 aa).

Residues 61-165 (TLLVELLGRI…NDKMMLIKAR (105 aa)) enclose the THUMP domain. Residues 183 to 184 (LI), lysine 265, glycine 287, and glutamine 296 contribute to the ATP site. Cysteine 344 and cysteine 456 are oxidised to a cystine. In terms of domain architecture, Rhodanese spans 404–484 (LSANEVILDI…DNVKVLNKIS (81 aa)). The Cysteine persulfide intermediate role is filled by cysteine 456.

Belongs to the ThiI family.

The protein resides in the cytoplasm. The catalysed reaction is [ThiI sulfur-carrier protein]-S-sulfanyl-L-cysteine + a uridine in tRNA + 2 reduced [2Fe-2S]-[ferredoxin] + ATP + H(+) = [ThiI sulfur-carrier protein]-L-cysteine + a 4-thiouridine in tRNA + 2 oxidized [2Fe-2S]-[ferredoxin] + AMP + diphosphate. It catalyses the reaction [ThiS sulfur-carrier protein]-C-terminal Gly-Gly-AMP + S-sulfanyl-L-cysteinyl-[cysteine desulfurase] + AH2 = [ThiS sulfur-carrier protein]-C-terminal-Gly-aminoethanethioate + L-cysteinyl-[cysteine desulfurase] + A + AMP + 2 H(+). It functions in the pathway cofactor biosynthesis; thiamine diphosphate biosynthesis. Its function is as follows. Catalyzes the ATP-dependent transfer of a sulfur to tRNA to produce 4-thiouridine in position 8 of tRNAs, which functions as a near-UV photosensor. Also catalyzes the transfer of sulfur to the sulfur carrier protein ThiS, forming ThiS-thiocarboxylate. This is a step in the synthesis of thiazole, in the thiamine biosynthesis pathway. The sulfur is donated as persulfide by IscS. This Histophilus somni (strain 2336) (Haemophilus somnus) protein is tRNA sulfurtransferase.